A 133-amino-acid chain; its full sequence is Small ribosomal subunit protein uS8 (133 aa).

Belongs to the universal ribosomal protein uS8 family. Part of the 30S ribosomal subunit. Contacts proteins S5 and S12.

Its function is as follows. One of the primary rRNA binding proteins, it binds directly to 16S rRNA central domain where it helps coordinate assembly of the platform of the 30S subunit. In Prochlorococcus marinus (strain MIT 9313), this protein is Small ribosomal subunit protein uS8.